We begin with the raw amino-acid sequence, 103 residues long: Small ribosomal subunit protein uS14c (103 aa).

It belongs to the universal ribosomal protein uS14 family. As to quaternary structure, part of the 30S ribosomal subunit.

The protein resides in the plastid. The protein localises to the chloroplast. In terms of biological role, binds 16S rRNA, required for the assembly of 30S particles. This is Small ribosomal subunit protein uS14c from Lolium perenne (Perennial ryegrass).